Consider the following 193-residue polypeptide: dTTP/UTP pyrophosphatase (193 aa).

D70 (proton acceptor) is an active-site residue.

It belongs to the Maf family. YhdE subfamily. The cofactor is a divalent metal cation.

Its subcellular location is the cytoplasm. It catalyses the reaction dTTP + H2O = dTMP + diphosphate + H(+). The catalysed reaction is UTP + H2O = UMP + diphosphate + H(+). Functionally, nucleoside triphosphate pyrophosphatase that hydrolyzes dTTP and UTP. May have a dual role in cell division arrest and in preventing the incorporation of modified nucleotides into cellular nucleic acids. The polypeptide is dTTP/UTP pyrophosphatase (Alcanivorax borkumensis (strain ATCC 700651 / DSM 11573 / NCIMB 13689 / SK2)).